The following is a 731-amino-acid chain: Pre-B-cell leukemia transcription factor-interacting protein 1 (731 aa).

Residues 1-10 (MASCPDSDNS) show a composition bias toward polar residues. Residues 1–155 (MASCPDSDNS…SSSDDDTDVD (155 aa)) are disordered. Position 43 is a phosphoserine (Ser-43). Composition is skewed to polar residues over residues 62 to 75 (LFQTESPQSGSILT) and 121 to 132 (LEGQSPPQSLPS). Ser-129, Ser-146, Ser-147, and Ser-148 each carry phosphoserine. The residue at position 152 (Thr-152) is a Phosphothreonine. Residues 270–348 (LLLDKLAKEN…QGLEADCVRG (79 aa)) adopt a coiled-coil conformation. 3 disordered regions span residues 354–377 (LSGGRGPQGDKAIREQGPREQEPE), 447–572 (GQDP…DPLP), and 698–731 (LKKRSGKKDKHSQSPRAAGPREGHSHSHHHHHRG). Residues 364-375 (KAIREQGPREQE) show a composition bias toward basic and acidic residues. The stretch at 377-417 (ELSFLKQKEQLEAEAQALRQELERQRRLLGSVQQDLERSLQ) forms a coiled coil. Composition is skewed to basic and acidic residues over residues 472–499 (WSGKEKWWDGQRDRKAEHWKHKKEESGR), 508–543 (QEDREPAGRWKEGRPRVEESGSKKEGKRQGPKEPPR), and 551–569 (SGEKQKQPRWREGTKDSHD). Positions 485–505 (RKAEHWKHKKEESGRERKKNW) match the Nuclear localization signal motif. Ser-567 is modified (phosphoserine). The short motif at 695 to 720 (DKALKKRSGKKDKHSQSPRAAGPREG) is the Nuclear localization signal element. The segment covering 698-707 (LKKRSGKKDK) has biased composition (basic residues).

Interacts with TEX11. Interacts with ESR1, PBX1, PBX2 and PBX3. As to expression, expressed in early hematopoietic precursors.

It is found in the cytoplasm. The protein localises to the cytoskeleton. It localises to the nucleus. Regulator of pre-B-cell leukemia transcription factors (BPXs) function. Inhibits the binding of PBX1-HOX complex to DNA and blocks the transcriptional activity of E2A-PBX1. Tethers estrogen receptor-alpha (ESR1) to microtubules and allows them to influence estrogen receptors-alpha signaling. This Homo sapiens (Human) protein is Pre-B-cell leukemia transcription factor-interacting protein 1 (PBXIP1).